The chain runs to 419 residues: Protein FAM217A (419 aa).

Disordered stretches follow at residues 1-60, 96-119, 236-299, and 317-382; these read MGRK…LENP, KGSTVDKRNSSVEENVTDESDLSE, SSSK…SRAL, and KNSK…RTKK. Residues 7–19 show a composition bias toward low complexity; it reads ESCSSSLHVSSIS. Residues 236 to 251 are compositionally biased toward low complexity; that stretch reads SSSKAIATKAKAPKIP. Composition is skewed to polar residues over residues 252 to 261 and 271 to 281; these read ETSTLQTSGV and NSGSGKPEQNV. Composition is skewed to low complexity over residues 282–296 and 334–345; these read SKWSLSSAGKSKSNS and PTTTTQATQPMA.

The protein belongs to the FAM217 family.

This chain is Protein FAM217A (Fam217a), found in Mus musculus (Mouse).